Consider the following 1362-residue polypeptide: Integrator complex subunit 2 homolog (1362 aa).

Low complexity predominate over residues 1-10; sequence MITSNNNNKN. Disordered regions lie at residues 1-20, 629-660, and 928-963; these read MITS…EMKS, TTGT…SSPN, and NNNK…EEEE. A compositionally biased stretch (basic and acidic residues) spans 945-955; sequence DDVKMKDKEKE.

This sequence belongs to the Integrator subunit 2 family. As to quaternary structure, component of the Integrator complex. The core complex associates with protein phosphatase 2A subunits, to form the Integrator-PP2A (INTAC) complex.

The protein localises to the nucleus. The protein resides in the cytoplasm. Component of the integrator complex, a multiprotein complex that terminates RNA polymerase II (Pol II) transcription in the promoter-proximal region of genes. The integrator complex provides a quality checkpoint during transcription elongation by driving premature transcription termination of transcripts that are unfavorably configured for transcriptional elongation: the complex terminates transcription by (1) catalyzing dephosphorylation of the C-terminal domain (CTD) of Pol II subunit polr2a, (2) degrading the exiting nascent RNA transcript via endonuclease activity and (3) promoting the release of Pol II from bound DNA. The integrator complex is also involved in terminating the synthesis of non-coding Pol II transcripts, such as enhancer RNAs (eRNAs), small nuclear RNAs (snRNAs), telomerase RNAs and long non-coding RNAs (lncRNAs). This is Integrator complex subunit 2 homolog (ints2) from Dictyostelium discoideum (Social amoeba).